The chain runs to 263 residues: MESLDEIQWKSPEFIQERGLNTNNVLEYFSLSPFYDRTSNNQVLMMQFQYQQIQIPPGVSFHQYFQSRLSEMTGIEFVIAYTKEPDFWIIRKQKRQDPQNTVTLQDYYIIGANVYQAPRIYDVLSSRLLASVLSIKNSTDLLNDMTSYHISDGGHSYINSIHGSSSKPSQSSAVSKPSSTNTGTNATTTPITLTTPSGATVPSTVSNGISTSTEIASGVFDTLLNDVVMNDDHLYIDEIPLYGEGSTLERLGLKGNKDAGLSL.

The interval 159-205 (NSIHGSSSKPSQSSAVSKPSSTNTGTNATTTPITLTTPSGATVPSTV) is disordered. Over residues 164–200 (SSSKPSQSSAVSKPSSTNTGTNATTTPITLTTPSGAT) the composition is skewed to low complexity.

The protein belongs to the Mediator complex subunit 6 family. Component of the Mediator complex.

The protein localises to the nucleus. Functionally, component of the Mediator complex, a coactivator involved in the regulated transcription of nearly all RNA polymerase II-dependent genes. Mediator functions as a bridge to convey information from gene-specific regulatory proteins to the basal RNA polymerase II transcription machinery. Mediator is recruited to promoters by direct interactions with regulatory proteins and serves as a scaffold for the assembly of a functional preinitiation complex with RNA polymerase II and the general transcription factors. This chain is Mediator of RNA polymerase II transcription subunit 6 (MED6), found in Candida albicans (strain SC5314 / ATCC MYA-2876) (Yeast).